The sequence spans 74 residues: Cytochrome c oxidase assembly factor 5 (74 aa).

The CHCH domain maps to E27–R65. The Cx10C motif signature appears at C30–C41. Disulfide bonds link C30–C57 and C41–C47. Position 37 is a phosphoserine (S37). Residues C47–C57 carry the Cx9C motif motif.

The protein belongs to the PET191 family.

Involved in an early step of the mitochondrial complex IV assembly process. This is Cytochrome c oxidase assembly factor 5 (Coa5) from Pongo abelii (Sumatran orangutan).